We begin with the raw amino-acid sequence, 102 residues long: Protein RnfH (102 aa).

Belongs to the UPF0125 (RnfH) family.

The protein is Protein RnfH of Haemophilus influenzae (strain 86-028NP).